A 211-amino-acid chain; its full sequence is Mitotic spindle assembly checkpoint protein MAD2B (211 aa).

Residues 13-203 enclose the HORMA domain; it reads QVVADVLCEF…SDILKMQLYV (191 aa). The interval 21–155 is mediates interaction with REV1 and REV3L and homodimerization; it reads EFLEVAVHLI…FTVLVHTREA (135 aa).

In terms of assembly, homooligomer. Heterodimer with REV3L. This dimer forms the minimal DNA polymerase zeta complex (Pol-zeta2), with REV3L bearing DNA polymerase catalytic activity, although its activity is very low in this context. Component of the tetrameric Pol-zeta complex (Pol-zeta4), which consists of REV3L, MAD2L2, POLD2 and POLD3; Pol-zeta4 is the fully active form of DNA polymerase zeta. Component of the shieldin complex, consisting of SHLD1, SHLD2, SHLD3 and MAD2L2/REV7. Within the complex, SHLD2 forms a scaffold which interacts with a SHLD3-MAD2L2 subcomplex via its N-terminus, and with SHLD1 via its C-terminus. Interacts with REV1. Interacts with ADAM9. Interacts with CHAMP1. Interacts with FZR1 (in complex with the anaphase promoting complex APC). May interact with CDC20. Interacts with RAN. Interacts with ELK1; the interaction is direct and recruits MAD2L2 to ELK1-specific promoters. May interact with the JNK kinases MAPK8 and/or MAPK9 to stimulate ELK1 phosphorylation and transcriptional activity upon DNA damage. Interacts with TCF7L2; prevents its binding to promoters and negatively modulates its transcriptional activity. Interacts with YY1AP1. Interacts with PRCC; the interaction is direct. Interacts with POGZ. Interacts with ASTE1.

Its subcellular location is the nucleus. The protein resides in the cytoplasm. It localises to the cytoskeleton. The protein localises to the spindle. Adapter protein able to interact with different proteins and involved in different biological processes. Mediates the interaction between the error-prone DNA polymerase zeta catalytic subunit REV3L and the inserter polymerase REV1, thereby mediating the second polymerase switching in translesion DNA synthesis. Translesion DNA synthesis releases the replication blockade of replicative polymerases, stalled in presence of DNA lesions. Component of the shieldin complex, which plays an important role in repair of DNA double-stranded breaks (DSBs). During G1 and S phase of the cell cycle, the complex functions downstream of TP53BP1 to promote non-homologous end joining (NHEJ) and suppress DNA end resection. Mediates various NHEJ-dependent processes including immunoglobulin class-switch recombination, and fusion of unprotected telomeres. May also regulate another aspect of cellular response to DNA damage through regulation of the JNK-mediated phosphorylation and activation of the transcriptional activator ELK1. Inhibits the FZR1- and probably CDC20-mediated activation of the anaphase promoting complex APC thereby regulating progression through the cell cycle. Regulates TCF7L2-mediated gene transcription and may play a role in epithelial-mesenchymal transdifferentiation. This Bos taurus (Bovine) protein is Mitotic spindle assembly checkpoint protein MAD2B (MAD2L2).